We begin with the raw amino-acid sequence, 349 residues long: Transmembrane protein 255A (349 aa).

The next 4 membrane-spanning stretches (helical) occupy residues 30–50 (IYVT…GLAA), 57–77 (VTVG…LGII), 89–109 (LVAS…CAIV), and 226–246 (TILN…LGGF). The segment at 301-329 (VFPSSPPSGLSDEPQSASPSPSYMWSSSA) is disordered. Positions 316-329 (SASPSPSYMWSSSA) are enriched in low complexity.

Belongs to the TMEM255 family.

The protein localises to the membrane. The sequence is that of Transmembrane protein 255A (TMEM255A) from Macaca fascicularis (Crab-eating macaque).